A 466-amino-acid chain; its full sequence is Cysteine--tRNA ligase (466 aa).

Cys29 serves as a coordination point for Zn(2+). Positions Pro31–Asn41 match the 'HIGH' region motif. Zn(2+) is bound by residues Cys209, His234, and Glu238. Residues Lys266–Ser270 carry the 'KMSKS' region motif. Lys269 contacts ATP. Ser270 is modified (phosphoserine).

The protein belongs to the class-I aminoacyl-tRNA synthetase family. In terms of assembly, monomer. Zn(2+) serves as cofactor.

The protein resides in the cytoplasm. It catalyses the reaction tRNA(Cys) + L-cysteine + ATP = L-cysteinyl-tRNA(Cys) + AMP + diphosphate. This Bacillus pumilus (strain SAFR-032) protein is Cysteine--tRNA ligase.